We begin with the raw amino-acid sequence, 117 residues long: uncharacterized protein (117 aa).

Its subcellular location is the cytoplasm. The protein resides in the nucleus. This is an uncharacterized protein from Schizosaccharomyces pombe (strain 972 / ATCC 24843) (Fission yeast).